The primary structure comprises 219 residues: Elongation factor Ts (219 aa).

Positions 82–85 (TDFV) are involved in Mg(2+) ion dislocation from EF-Tu.

Belongs to the EF-Ts family.

Its subcellular location is the cytoplasm. In terms of biological role, associates with the EF-Tu.GDP complex and induces the exchange of GDP to GTP. It remains bound to the aminoacyl-tRNA.EF-Tu.GTP complex up to the GTP hydrolysis stage on the ribosome. The sequence is that of Elongation factor Ts from Anaeromyxobacter sp. (strain K).